The chain runs to 69 residues: DNA-directed RNA polymerase subunit omega (69 aa).

The protein belongs to the RNA polymerase subunit omega family. In terms of assembly, the RNAP catalytic core consists of 2 alpha, 1 beta, 1 beta' and 1 omega subunit. When a sigma factor is associated with the core the holoenzyme is formed, which can initiate transcription.

The enzyme catalyses RNA(n) + a ribonucleoside 5'-triphosphate = RNA(n+1) + diphosphate. Its function is as follows. Promotes RNA polymerase assembly. Latches the N- and C-terminal regions of the beta' subunit thereby facilitating its interaction with the beta and alpha subunits. The chain is DNA-directed RNA polymerase subunit omega from Exiguobacterium sp. (strain ATCC BAA-1283 / AT1b).